Reading from the N-terminus, the 729-residue chain is Receptor-like protein 2 (729 aa).

Residues 1–44 form the signal peptide; sequence MRSKAKGLVRPLITKPVQPLSSHMHLFLLCILFLSALFLTLSEA. The N-cap stretch occupies residues 45-82; that stretch reads VCNLQDRESLIWFSGNVSSSVSPLNWNLSIDCCSWEGI. The Extracellular portion of the chain corresponds to 45 to 707; the sequence is VCNLQDRESL…AKENDELNRT (663 aa). N-linked (GlcNAc...) asparagine glycosylation is found at N60 and N71. 20 LRR repeats span residues 89–113, 114–137, 139–163, 168–193, 195–219, 220–244, 245–268, 269–292, 293–316, 317–340, 342–364, 365–389, 391–413, 414–437, 439–464, 468–492, 493–515, 516–540, 542–560, and 561–584; these read DSHV…VQNI, HRLS…FFST, DQLM…AFGN, FFSI…VYLQ, TINL…MCRS, SPQL…LGRC, LRLT…IYNL, SELE…ITRL, RKLT…IGNL, SSLR…LANC, KLVK…EFSQ, LQSL…IFSC, SLTA…VLEL, ESLS…SILQ, CRKL…DFLS, FPKL…LINL, NKVE…WLGT, LPDL…LFQL, ALMS…PIFL, and NPNN…IYIR. N145 and N163 each carry an N-linked (GlcNAc...) asparagine glycan. N-linked (GlcNAc...) asparagine glycosylation is found at N202 and N205. N256, N267, N288, N315, N330, and N339 each carry an N-linked (GlcNAc...) asparagine glycan. Residue N375 is glycosylated (N-linked (GlcNAc...) asparagine). N-linked (GlcNAc...) asparagine glycosylation is present at N428. N-linked (GlcNAc...) asparagine glycosylation is found at N564, N587, N611, N622, N635, N657, and N705. LRR repeat units lie at residues 599–623, 624–647, and 649–672; these read LKVL…LSNL, TNLE…LTNL, and FLSY…QFDT. Residues 690–707 are C-cap/acidic domain; it reads LTSCKPTRAKENDELNRT. Residues 708-728 traverse the membrane as a helical segment; that stretch reads FLMGIAIGYFLSFVSILVVRA. Position 729 (W729) is a topological domain, cytoplasmic.

Belongs to the RLP family.

The protein localises to the cell membrane. Its function is as follows. Involved in the perception of CLV3 and CLV3-like peptides, that act as extracellular signals regulating meristems maintenance. In Arabidopsis thaliana (Mouse-ear cress), this protein is Receptor-like protein 2.